Here is a 1284-residue protein sequence, read N- to C-terminus: Putative late blight resistance protein homolog R1B-16 (1284 aa).

Residues 533 to 555 (PRMNEEIVGFKDVIENLRNQLLN) adopt a coiled-coil conformation. Positions 534–821 (RMNEEIVGFK…SESFIKSSEG (288 aa)) constitute an NB-ARC domain. Residue 567–574 (GMPGLGKT) participates in ATP binding. 8 LRR repeats span residues 942-966 (FKFLKVLDLEHQVVIDSIPTELFYL), 985-1010 (LWNLETLILKHVSRCTVLLPSTVWDM), 1013-1036 (LRHLHIPNFRPENEEALLENSAKL), 1085-1107 (PIRLEILKLYRSKAFNTIPFCIS), 1108-1135 (APNLKYLKLSRSYMDSQYLSETADHLKN), 1159-1181 (FPQLKILKLEYLALMKWIVADDA), 1182-1206 (FPNLEQLVLHECRHLMEIPSCFMDI), and 1219-1243 (ESVVKSAMNIQETQVEDYQNTNFKL). In terms of domain architecture, HMA spans 1217–1284 (CNESVVKSAM…VEKQRKRGML (68 aa)).

It belongs to the disease resistance NB-LRR family.

The protein localises to the cytoplasm. It localises to the membrane. In terms of biological role, confers resistance to late blight (Phytophthora infestans) races carrying the avirulence gene Avr1. Resistance proteins guard the plant against pathogens that contain an appropriate avirulence protein via an indirect interaction with this avirulence protein. That triggers a defense system including the hypersensitive response, which restricts the pathogen growth. This Solanum demissum (Wild potato) protein is Putative late blight resistance protein homolog R1B-16 (R1B-16).